Consider the following 192-residue polypeptide: Cytochrome c4 (192 aa).

2 Cytochrome c domains span residues 12-90 (GDPQ…ATQP) and 99-191 (ELAS…QGLS). 6 residues coordinate heme c: cysteine 25, cysteine 28, histidine 29, cysteine 120, cysteine 123, and histidine 124.

In terms of processing, binds 2 heme c groups covalently per subunit.

It localises to the periplasm. In terms of biological role, diheme, high potential cytochrome c believed to be an intermediate electron donor in an anaerobic electron transport chain. This Thiocapsa roseopersicina protein is Cytochrome c4.